The following is a 315-amino-acid chain: Neuroguidin (315 aa).

An N-acetylalanine modification is found at Ala2. Residues 5–42 adopt a coiled-coil conformation; sequence EVLESDLPNAVALLKNLQEQVMAVTAQVQTLTKKVQAK. A necessary for interaction with EIF4E region spans residues 41–174; that stretch reads AKAYPTEKGL…KGTAKKYVPP (134 aa). Residues Ser121, Ser142, and Ser143 each carry the phosphoserine modification. A disordered region spans residues 123–174; sequence SENDPLRFKPHPSNMMSKLSSEDEEEDEAEEGQSGASGKKSGKGTAKKYVPP. Residues 144–153 show a composition bias toward acidic residues; the sequence is EDEEEDEAEE. The stretch at 181–205 forms a coiled coil; the sequence is YDETEAEREKKRLERAKRRALSSSV. Ser204 and Ser214 each carry phosphoserine. The segment at 252–315 is disordered; it reads SKREKGRRKR…RKKKGFRRRR (64 aa). The span at 264 to 276 shows a compositional bias: polar residues; sequence VMSSQLHSLTHFS. Residues 295–315 are compositionally biased toward basic residues; sequence TKKRKKIPKKGRKKKGFRRRR.

It belongs to the SAS10 family. In terms of assembly, part of the small subunit (SSU) processome, composed of more than 70 proteins and the RNA chaperone small nucleolar RNA (snoRNA) U3. Interacts with CPEB1 and EIF4E.

It is found in the nucleus. The protein resides in the nucleolus. The protein localises to the chromosome. Its subcellular location is the centromere. It localises to the cytoplasm. It is found in the cell projection. The protein resides in the axon. The protein localises to the dendrite. Its subcellular location is the filopodium. Its function is as follows. Part of the small subunit (SSU) processome, first precursor of the small eukaryotic ribosomal subunit. During the assembly of the SSU processome in the nucleolus, many ribosome biogenesis factors, an RNA chaperone and ribosomal proteins associate with the nascent pre-rRNA and work in concert to generate RNA folding, modifications, rearrangements and cleavage as well as targeted degradation of pre-ribosomal RNA by the RNA exosome. Its dissociation from the complex determines the transition from state pre-A1 to state pre-A1*. Inhibits mRNA translation in a cytoplasmic polyadenylation element (CPE)-dependent manner. This Bos taurus (Bovine) protein is Neuroguidin (NGDN).